The chain runs to 371 residues: Chaperone protein DnaJ (371 aa).

The 66-residue stretch at 5 to 70 (CYYEILNISK…SKRSRYDQFG (66 aa)) folds into the J domain. Residues 127-204 (GVEKEITIPR…CYGNGKVKKQ (78 aa)) form a CR-type zinc finger. 8 residues coordinate Zn(2+): cysteine 140, cysteine 143, cysteine 156, cysteine 159, cysteine 178, cysteine 181, cysteine 192, and cysteine 195. 4 CXXCXGXG motif repeats span residues 140–147 (CDSCDGTG), 156–163 (CHACHGQG), 178–185 (CPVCNGTG), and 192–199 (CDACYGNG).

Belongs to the DnaJ family. As to quaternary structure, homodimer. Zn(2+) is required as a cofactor.

It localises to the cytoplasm. Its function is as follows. Participates actively in the response to hyperosmotic and heat shock by preventing the aggregation of stress-denatured proteins and by disaggregating proteins, also in an autonomous, DnaK-independent fashion. Unfolded proteins bind initially to DnaJ; upon interaction with the DnaJ-bound protein, DnaK hydrolyzes its bound ATP, resulting in the formation of a stable complex. GrpE releases ADP from DnaK; ATP binding to DnaK triggers the release of the substrate protein, thus completing the reaction cycle. Several rounds of ATP-dependent interactions between DnaJ, DnaK and GrpE are required for fully efficient folding. Also involved, together with DnaK and GrpE, in the DNA replication of plasmids through activation of initiation proteins. This is Chaperone protein DnaJ from Francisella tularensis subsp. holarctica (strain LVS).